A 297-amino-acid polypeptide reads, in one-letter code: Ribosomal RNA small subunit methyltransferase A (297 aa).

S-adenosyl-L-methionine-binding residues include Asn-31, Leu-33, Gly-58, Glu-79, Asp-104, and Asn-129.

Belongs to the class I-like SAM-binding methyltransferase superfamily. rRNA adenine N(6)-methyltransferase family. RsmA subfamily.

Its subcellular location is the cytoplasm. It carries out the reaction adenosine(1518)/adenosine(1519) in 16S rRNA + 4 S-adenosyl-L-methionine = N(6)-dimethyladenosine(1518)/N(6)-dimethyladenosine(1519) in 16S rRNA + 4 S-adenosyl-L-homocysteine + 4 H(+). Its function is as follows. Specifically dimethylates two adjacent adenosines (A1518 and A1519) in the loop of a conserved hairpin near the 3'-end of 16S rRNA in the 30S particle. May play a critical role in biogenesis of 30S subunits. This chain is Ribosomal RNA small subunit methyltransferase A, found in Staphylococcus aureus (strain bovine RF122 / ET3-1).